The primary structure comprises 160 residues: Zinc finger A20 and AN1 domain-containing stress-associated protein 6 (160 aa).

The segment at 18–52 (PEAPILCVNNCGFFGSRMTENMCSKCYRDTVKAKT) adopts an A20-type zinc-finger fold. Positions 24, 28, 40, and 43 each coordinate Zn(2+). Residues 73–94 (EVTDGGSGSVADGKQVMEEDTP) form a disordered region. The AN1-type zinc-finger motif lies at 95–141 (KPPSNRCLSCRKKVGLTGFKCRCGGTFCSMHRYADSHKCTFDYKQVG). Zn(2+) contacts are provided by C101, C104, C115, C117, C122, H125, H131, and C133.

In terms of biological role, may be involved in environmental stress response. This chain is Zinc finger A20 and AN1 domain-containing stress-associated protein 6 (SAP6), found in Oryza sativa subsp. japonica (Rice).